The primary structure comprises 376 residues: MSASRTNVNVAIVGTGNIGGELLNQIKGFNENASTNGTTSFNVVAISSMEGHYVSKDYQPINLSEWKNLTSQNQGAYSLDALVDFLAKSPLPAILVDNTASEAIAQSYPKFLSKKINIATPNKKAFSASNDVYQNIIKASKESGALLMHEASVGAGLPIISTLKELIATGDEIIKIEGIFSGTLSYIFNVWSPNGKKGTASFSDIVKIAKQNGYTEPDPRDDLNGMDVARKVTILSRIAGVHVESASSFPVKSLIPEPLKSAVNAEEFLAGLPNFDSEFASMREEAEKEGKVVRFVGEADVANKTTLVKLEKYDASHPFANLQSSDNIISFTTKRYHTRPLVVIGAGAGAAVTAAGVLGDMIKIMSQVRASDAPSA.

Residues Asn17 and Ile18 each coordinate NADP(+). Residue Ile18 participates in NAD(+) binding. NADPH is bound by residues Ile18, Lys67, Thr99, and Lys123. Thr99 and Lys123 together coordinate NADP(+). Thr99 contacts NAD(+). Residues Glu150, Val153, Ala155, and Leu157 each contribute to the Na(+) site. Phosphoserine is present on Ser201. The NADP(+) site is built by Gly213 and Glu216. L-homoserine-binding residues include Glu216 and Asp227. The active-site Proton donor is Lys231. Residue Gly349 participates in NADP(+) binding. Gly349 contributes to the NAD(+) binding site. Gly349 serves as a coordination point for NADPH.

Belongs to the homoserine dehydrogenase family. A metal cation serves as cofactor.

The catalysed reaction is L-homoserine + NADP(+) = L-aspartate 4-semialdehyde + NADPH + H(+). It catalyses the reaction L-homoserine + NAD(+) = L-aspartate 4-semialdehyde + NADH + H(+). It functions in the pathway amino-acid biosynthesis; L-methionine biosynthesis via de novo pathway; L-homoserine from L-aspartate: step 3/3. Its pathway is amino-acid biosynthesis; L-threonine biosynthesis; L-threonine from L-aspartate: step 3/5. Catalyzes the conversion of L-aspartate-beta-semialdehyde (L-Asa) to L-homoserine (L-Hse), the third step in the biosynthesis of amino acids that derive from aspartate (the aspartate family of amino acids), including methioinine and threonine, the latter of which is a precursor to isoleucine; production of homoserine leads to a branch-point in the pathway as it can either be O-phosphorylated for processing to threonine, or O-acylated for processing to methionine. The sequence is that of Homoserine dehydrogenase from Schizosaccharomyces pombe (strain 972 / ATCC 24843) (Fission yeast).